We begin with the raw amino-acid sequence, 310 residues long: Upstream stimulatory factor 1 (310 aa).

A compositionally biased stretch (polar residues) spans 1 to 17 (MKGQQKTAETEEGTVQI). 2 disordered regions span residues 1 to 26 (MKGQ…ATGE) and 171 to 209 (QGGS…EVER). Over residues 190-209 (EAPRTTRDEKRRAQHNEVER) the composition is skewed to basic and acidic residues. Residues 199–254 (KRRAQHNEVERRRRDKINNWIVQLSKIIPDCSMESTKSGQSKGGILSKACDYIQEL) enclose the bHLH domain. Positions 271–292 (LQLDNDVLRQQVEDLKNKNLLL) are leucine-zipper. Lysine 306 is covalently cross-linked (Glycyl lysine isopeptide (Lys-Gly) (interchain with G-Cter in SUMO2)).

As to quaternary structure, efficient DNA binding requires dimerization with another bHLH protein. Binds DNA as a homodimer or a heterodimer (USF1/USF2).

Its subcellular location is the nucleus. Transcription factor that binds to a symmetrical DNA sequence (E-boxes) (5'-CACGTG-3') that is found in a variety of viral and cellular promoters. The protein is Upstream stimulatory factor 1 (Usf1) of Mus musculus (Mouse).